The chain runs to 129 residues: Small ribosomal subunit protein uS12 (129 aa).

This sequence belongs to the universal ribosomal protein uS12 family. Part of the 30S ribosomal subunit. Contacts proteins S8 and S17. May interact with IF1 in the 30S initiation complex.

Functionally, with S4 and S5 plays an important role in translational accuracy. Its function is as follows. Interacts with and stabilizes bases of the 16S rRNA that are involved in tRNA selection in the A site and with the mRNA backbone. Located at the interface of the 30S and 50S subunits, it traverses the body of the 30S subunit contacting proteins on the other side and probably holding the rRNA structure together. The combined cluster of proteins S8, S12 and S17 appears to hold together the shoulder and platform of the 30S subunit. This Rickettsia typhi (strain ATCC VR-144 / Wilmington) protein is Small ribosomal subunit protein uS12.